The primary structure comprises 110 residues: UPF0473 protein SSP1146 (110 aa).

The protein belongs to the UPF0473 family.

This chain is UPF0473 protein SSP1146, found in Staphylococcus saprophyticus subsp. saprophyticus (strain ATCC 15305 / DSM 20229 / NCIMB 8711 / NCTC 7292 / S-41).